A 573-amino-acid polypeptide reads, in one-letter code: DNA ligase (573 aa).

An ATP-binding site is contributed by Glu250. Lys252 acts as the N6-AMP-lysine intermediate in catalysis. ATP-binding residues include Arg257, Arg272, Glu301, Phe342, Arg432, and Lys438.

This sequence belongs to the ATP-dependent DNA ligase family. Mg(2+) serves as cofactor.

It carries out the reaction ATP + (deoxyribonucleotide)n-3'-hydroxyl + 5'-phospho-(deoxyribonucleotide)m = (deoxyribonucleotide)n+m + AMP + diphosphate.. Functionally, DNA ligase that seals nicks in double-stranded DNA during DNA replication, DNA recombination and DNA repair. This chain is DNA ligase, found in Methanococcus vannielii (strain ATCC 35089 / DSM 1224 / JCM 13029 / OCM 148 / SB).